Here is a 357-residue protein sequence, read N- to C-terminus: Peptide chain release factor 1 (357 aa).

At glutamine 236 the chain carries N5-methylglutamine.

This sequence belongs to the prokaryotic/mitochondrial release factor family. Post-translationally, methylated by PrmC. Methylation increases the termination efficiency of RF1.

It is found in the cytoplasm. In terms of biological role, peptide chain release factor 1 directs the termination of translation in response to the peptide chain termination codons UAG and UAA. The sequence is that of Peptide chain release factor 1 from Mycobacterium marinum (strain ATCC BAA-535 / M).